The primary structure comprises 446 residues: Signal recognition particle 54 kDa protein (446 aa).

GTP contacts are provided by residues 103 to 110 (GVQGTGKT), 185 to 189 (DTAGR), and 245 to 248 (TKMD).

It belongs to the GTP-binding SRP family. SRP54 subfamily. In terms of assembly, part of the signal recognition particle protein translocation system, which is composed of SRP and FtsY. Archaeal SRP consists of a 7S RNA molecule of 300 nucleotides and two protein subunits: SRP54 and SRP19.

Its subcellular location is the cytoplasm. The enzyme catalyses GTP + H2O = GDP + phosphate + H(+). Involved in targeting and insertion of nascent membrane proteins into the cytoplasmic membrane. Binds to the hydrophobic signal sequence of the ribosome-nascent chain (RNC) as it emerges from the ribosomes. The SRP-RNC complex is then targeted to the cytoplasmic membrane where it interacts with the SRP receptor FtsY. The polypeptide is Signal recognition particle 54 kDa protein (Metallosphaera sedula (strain ATCC 51363 / DSM 5348 / JCM 9185 / NBRC 15509 / TH2)).